Reading from the N-terminus, the 360-residue chain is Histidinol-phosphate aminotransferase (360 aa).

Residue Lys-218 is modified to N6-(pyridoxal phosphate)lysine.

The protein belongs to the class-II pyridoxal-phosphate-dependent aminotransferase family. Histidinol-phosphate aminotransferase subfamily. In terms of assembly, homodimer. It depends on pyridoxal 5'-phosphate as a cofactor.

The catalysed reaction is L-histidinol phosphate + 2-oxoglutarate = 3-(imidazol-4-yl)-2-oxopropyl phosphate + L-glutamate. It participates in amino-acid biosynthesis; L-histidine biosynthesis; L-histidine from 5-phospho-alpha-D-ribose 1-diphosphate: step 7/9. In Chlorobium phaeobacteroides (strain DSM 266 / SMG 266 / 2430), this protein is Histidinol-phosphate aminotransferase.